Reading from the N-terminus, the 287-residue chain is ATP synthase gamma chain (287 aa).

This sequence belongs to the ATPase gamma chain family. F-type ATPases have 2 components, CF(1) - the catalytic core - and CF(0) - the membrane proton channel. CF(1) has five subunits: alpha(3), beta(3), gamma(1), delta(1), epsilon(1). CF(0) has three main subunits: a, b and c.

The protein localises to the cell inner membrane. In terms of biological role, produces ATP from ADP in the presence of a proton gradient across the membrane. The gamma chain is believed to be important in regulating ATPase activity and the flow of protons through the CF(0) complex. In Escherichia fergusonii (strain ATCC 35469 / DSM 13698 / CCUG 18766 / IAM 14443 / JCM 21226 / LMG 7866 / NBRC 102419 / NCTC 12128 / CDC 0568-73), this protein is ATP synthase gamma chain.